We begin with the raw amino-acid sequence, 81 residues long: uncharacterized protein (81 aa).

It to Synechocystis PCC 6803 ssr2439.

In terms of biological role, may have a regulatory function. This is an uncharacterized protein from Synechococcus elongatus (strain ATCC 33912 / PCC 7942 / FACHB-805) (Anacystis nidulans R2).